The sequence spans 1631 residues: Ras GTPase-activating-like protein IQGAP3 (1631 aa).

Residues 34–149 form the Calponin-homology (CH) domain; it reads LCRLEEAKRW…YCIHALSLFL (116 aa). Y162 is subject to Phosphotyrosine. Position 539 is a phosphoserine (S539). IQ domains are found at residues 730 to 759, 760 to 789, 790 to 819, and 820 to 849; these read NVGF…FLRT, WLPA…YFKA, NLDA…YFQK, and NVNS…APHP. In terms of domain architecture, Ras-GAP spans 1004–1253; sequence YLLLQLFKTA…LKFRKFIHRA (250 aa). Residue S1424 is modified to Phosphoserine.

The protein is Ras GTPase-activating-like protein IQGAP3 (IQGAP3) of Homo sapiens (Human).